Here is a 338-residue protein sequence, read N- to C-terminus: E3 ubiquitin-protein ligase SPL1 (338 aa).

The helical transmembrane segment at 1 to 21 (MIHLAGFTCCLGGVALYLLTR) threads the bilayer. The Chloroplast intermembrane portion of the chain corresponds to 22–223 (STGRDIKSIT…KLGDLSRRFK (202 aa)). A helical transmembrane segment spans residues 224–246 (YASMGLTVLGVILISKPVIEYIL). Topologically, residues 247-338 (KRIEDTLERR…IQQVLKIYRH (92 aa)) are cytoplasmic. The RING-type zinc-finger motif lies at 291 to 326 (CVVCLDQKYNTAFVECGHMCCCTPCSLQLRTCPLCR).

It is found in the plastid. Its subcellular location is the chloroplast outer membrane. It catalyses the reaction S-ubiquitinyl-[E2 ubiquitin-conjugating enzyme]-L-cysteine + [acceptor protein]-L-lysine = [E2 ubiquitin-conjugating enzyme]-L-cysteine + N(6)-ubiquitinyl-[acceptor protein]-L-lysine.. It functions in the pathway protein modification; protein ubiquitination. Functionally, possesses E3 ubiquitin-protein ligase activity. This is E3 ubiquitin-protein ligase SPL1 from Arabidopsis thaliana (Mouse-ear cress).